Reading from the N-terminus, the 235-residue chain is Small capsomere-interacting protein (235 aa).

Positions 104-235 are disordered; sequence PRIIRPQPPN…SGNASRSRRV (132 aa). Residues 127 to 139 are compositionally biased toward polar residues; that stretch reads PQKTQSADQSALQ. Positions 158 to 188 are enriched in low complexity; it reads TTSASVGQQQHVVSGSSGQQPQQGAQSSTVQ. The span at 220–235 shows a compositional bias: polar residues; sequence LSHTGQSGNASRSRRV.

Belongs to the herpesviridae small capsomere-interacting protein family. In terms of assembly, interacts with the major capsid protein/MCP.

It localises to the virion. It is found in the host nucleus. Participates in the assembly of the infectious particles by decorating the outer surface of the capsid shell and thus forming a layer between the capsid and the tegument. Complexes composed of the capsid protein VP5 and VP26 assemble together in the host cytoplasm and are translocated to the nucleus, where they accumulate and participate in capsid assembly. Its function is as follows. Participates in the assembly of the infectious particles by decorating the outer surface of the capsid shell and thus forming a layer between the capsid and the tegument. Complexes composed of the major capsid protein and small capsomere-interacting protein/SCP assemble together in the host cytoplasm and are translocated to the nucleus, where they accumulate and participate in capsid assembly. The polypeptide is Small capsomere-interacting protein (Homo sapiens (Human)).